The following is a 198-amino-acid chain: Nucleoid occlusion factor SlmA (198 aa).

The 62-residue stretch at 9–70 (RNRREEILQS…SLIEFIEDSL (62 aa)) folds into the HTH tetR-type domain. A DNA-binding region (H-T-H motif) is located at residues 33-52 (TTAKLAASVGVSEAALYRHF). A coiled-coil region spans residues 117–145 (EQDRLQGRINQLFERIEAQLRQVLREKKM).

Belongs to the nucleoid occlusion factor SlmA family. Homodimer. Interacts with FtsZ.

Its subcellular location is the cytoplasm. The protein resides in the nucleoid. Functionally, required for nucleoid occlusion (NO) phenomenon, which prevents Z-ring formation and cell division over the nucleoid. Acts as a DNA-associated cell division inhibitor that binds simultaneously chromosomal DNA and FtsZ, and disrupts the assembly of FtsZ polymers. SlmA-DNA-binding sequences (SBS) are dispersed on non-Ter regions of the chromosome, preventing FtsZ polymerization at these regions. The protein is Nucleoid occlusion factor SlmA of Cronobacter sakazakii (strain ATCC BAA-894) (Enterobacter sakazakii).